Here is a 101-residue protein sequence, read N- to C-terminus: UPF0235 protein Cphamn1_2066 (101 aa).

Belongs to the UPF0235 family.

This Chlorobium phaeobacteroides (strain BS1) protein is UPF0235 protein Cphamn1_2066.